The chain runs to 678 residues: RxLR effector protein PITG_16705 (678 aa).

An N-terminal signal peptide occupies residues 1–20 (MHLFFLTAVAFVITSVSVDA). Positions 46-61 (RLLRKNSTVDLVGEER) match the RxLR-dEER motif.

The protein belongs to the RxLR effector family.

It is found in the secreted. Its subcellular location is the host cytoplasm. Its function is as follows. Effector that enhances P.infestans colonization of Nicotiana benthamiana leaves. The sequence is that of RxLR effector protein PITG_16705 from Phytophthora infestans (strain T30-4) (Potato late blight agent).